A 1233-amino-acid chain; its full sequence is MVESLTVENQEHNVQPPSVTSAGDSYSTLATDLPLPSTNDIIESRDQLTESDLDEAINATENFAQELSSQRKSSKLKGHKKKNQGQIKANRDRDTIVKLSSSVGETEEASTRDAISHDLERKDDVIEIATDTINDATESPTQIPIDVNVVIKETSTNNVAEGTENVPPIKESTGIEVGNSPITRRKKNKKKKTTNRRGRNSSNPADTTDLSKQSTLDSILVGIEEYLQEDGSKNEDIKVNIVQDEPVNVEKMDIRTRNESSDKTFDIDVPNKDNVDETSSKSENNINEEKAEHTLPREENEILNVNEGNAASFKHQLEPHGLEAGDENGQASTKDVESESLTKNGFNFKENESKHLKAGEKQQTESDRDGISPSVLAKNQKETEIGKEDHVFEQKDKEDEKCRKELSVNHENNMSHNFNAAGSDSIIPPETERETYDDETMGPTKRISDNEKNLQHGTNDISVEVEKEEEEEEEEEENSTFSKVKKENVTGEQEAVRNNEVSGTEEESTSKGEEIMGGDEKQSEAGEKSSIIEIEGSANSAKISKDNLVLEDEAEAPTQENKPTEVVGEIDIPDAPRDDVEIVEAVEKNIIPEDLEVAKEDQEGEQVKLDEPVKAMKDDKIAMRGAESISEDMKKKQEGTAELSNEKAKKEVDETARESAEGVEVEKSKTPESPKVVKRCTSGRPEDLQINERDPEVLKEDVRVPDEDVKPEIATTIENSEEEDPKSQRVQISTEQAETTQKDMGDVGSTTSFKEEEKPKRFEITQEGDKITGKDTNHEHGEATEAASENSKASDVGTAEKYIEPSSESVKKDTEEDAEVENSEKTEFIKVKAELENLDAPKEAEVTAELNKENEDVEVDTEEDAEVENSEKTEFIKVKAELGNLDAPKEAEVTAELNKENEDVEVAATSKEDIETKCSEPAETPIEDGTCTEAEVSKKDAEAVTKEDENMENSKIAEALKDVTGDQEIDDINISDEFQRTVELPELEKQDIKDNKGEDKELEVEETEKETSLPDLVVEENITEEKNEIKQEEEEVSQLDFNETESISKEAPNNDENGFEDQSTRENPKKASADDIFKDILDETNEFLEQLKIVDDSELNALLQSLDAKDSTTQTTEQSKKNNDKPQDVITTSEIRKLNEKEPVYIYTSLAGGGFHMIPRTNRLSTILTANRIPFTYRDLGTDDEARKVWKTFSKGRSLPGVVRGHNDLIGNWEEIEEANEDYKLRELIYDTI.

7 disordered regions span residues 1 to 39 (MVES…PSTN), 65 to 116 (QELS…DAIS), 160 to 211 (AEGT…TDLS), 250 to 577 (EKMD…DAPR), 594 to 825 (DLEV…NSEK), 851 to 872 (NKEN…NSEK), and 902 to 955 (EDVE…ENSK). The span at 72–83 (KSSKLKGHKKKN) shows a compositional bias: basic residues. A Phosphoserine modification is found at S180. A compositionally biased stretch (basic residues) spans 183–199 (TRRKKNKKKKTTNRRGR). Residues 201-211 (SSNPADTTDLS) are compositionally biased toward polar residues. Composition is skewed to basic and acidic residues over residues 250–280 (EKMD…ETSS) and 287–300 (NEEK…REEN). The span at 329 to 345 (GQASTKDVESESLTKNG) shows a compositional bias: polar residues. 2 stretches are compositionally biased toward basic and acidic residues: residues 349 to 370 (KENE…DRDG) and 379 to 408 (NQKE…ELSV). Positions 409–422 (NHENNMSHNFNAAG) are enriched in polar residues. S462 carries the post-translational modification Phosphoserine. The span at 466–478 (EKEEEEEEEEEEN) shows a compositional bias: acidic residues. Basic and acidic residues-rich tracts occupy residues 484–497 (VKKE…EAVR), 508–527 (STSK…EAGE), 594–622 (DLEV…DKIA), 631–672 (EDMK…KTPE), and 684–711 (RPED…DVKP). The residue at position 523 (S523) is a Phosphoserine. Residues 728–739 (QRVQISTEQAET) are compositionally biased toward polar residues. Residues 753-783 (FKEEEKPKRFEITQEGDKITGKDTNHEHGEA) show a composition bias toward basic and acidic residues. Residues 855–868 (EDVEVDTEEDAEVE) are compositionally biased toward acidic residues. T861 bears the Phosphothreonine mark. Composition is skewed to basic and acidic residues over residues 910–920 (SKEDIETKCSE) and 935–948 (EVSK…TKED). S975 carries the post-translational modification Phosphoserine. Disordered regions lie at residues 984–1071 (LPEL…PKKA) and 1109–1128 (KDST…KPQD). Residues 986–999 (ELEKQDIKDNKGED) show a composition bias toward basic and acidic residues. Phosphoserine occurs at positions 1037 and 1046. 2 stretches are compositionally biased toward basic and acidic residues: residues 1062-1071 (QSTRENPKKA) and 1118-1127 (QSKKNNDKPQ). The Glutaredoxin domain maps to 1132-1233 (TSEIRKLNEK…KLRELIYDTI (102 aa)).

This is an uncharacterized protein from Saccharomyces cerevisiae (strain ATCC 204508 / S288c) (Baker's yeast).